Consider the following 370-residue polypeptide: 1-propanol dehydrogenase PduQ (370 aa).

Belongs to the iron-containing alcohol dehydrogenase family. As to quaternary structure, interacts with PduP, probably via the N-terminus of PduQ. It depends on Fe cation as a cofactor.

It localises to the bacterial microcompartment. The enzyme catalyses 1-propanol + NAD(+) = propanal + NADH + H(+). Its pathway is polyol metabolism; 1,2-propanediol degradation. An iron-dependent alcohol dehydrogenase required for optimal 1,2-propanediol (1,2-PD) degradation. NAD(+) and NADH are regenerated internally within the bacterial microcompartment (BMC) dedicated to 1,2-PD degradation by the PduP and PduQ enzymes, which reduce NAD(+) and oxidize NADH respectively, although there must also be cofactor transport across the BMC. In terms of biological role, expression of a cosmid containing the full 21-gene pdu operon in E.coli allows E.coli to grow on 1,2-propanediol (1,2-PD) with the appearance of bacterial microcompartments (BMC) in its cytoplasm. Its function is as follows. The 1,2-PD-specific bacterial microcompartment (BMC) concentrates low levels of 1,2-PD catabolic enzymes, concentrates volatile reaction intermediates thus enhancing pathway flux and keeps the level of toxic, mutagenic propionaldehyde low. The protein is 1-propanol dehydrogenase PduQ of Citrobacter freundii.